Here is a 560-residue protein sequence, read N- to C-terminus: Putative transport protein VV1438 (560 aa).

5 helical membrane passes run 5-25, 37-57, 66-86, 91-111, and 164-184; these read VVLL…AIGL, LGNS…GFSF, FMLF…GIFF, HYFT…YFAS, and VGYA…AKLL. RCK C-terminal domains lie at 203 to 292 and 293 to 376; these read RGLG…FRNG and KEVF…RIGF. 6 consecutive transmembrane segments (helical) span residues 386–406, 409–429, 443–463, 478–498, 506–526, and 539–559; these read LLAF…TMTF, VSFS…LGFL, ALNM…GLSA, IIGI…LVGA, ALLF…DIVN, and AGTY…LIIL.

This sequence belongs to the AAE transporter (TC 2.A.81) family. YbjL subfamily.

The protein localises to the cell membrane. The chain is Putative transport protein VV1438 from Vibrio vulnificus (strain YJ016).